The primary structure comprises 147 residues: 3-dehydroquinate dehydratase (147 aa).

Tyr25 serves as the catalytic Proton acceptor. 3 residues coordinate substrate: Asn76, His82, and Asp89. The active-site Proton donor is the His102. Residues 103–104 (LS) and Arg113 each bind substrate.

Belongs to the type-II 3-dehydroquinase family. As to quaternary structure, homododecamer.

It catalyses the reaction 3-dehydroquinate = 3-dehydroshikimate + H2O. Its pathway is metabolic intermediate biosynthesis; chorismate biosynthesis; chorismate from D-erythrose 4-phosphate and phosphoenolpyruvate: step 3/7. Catalyzes a trans-dehydration via an enolate intermediate. The sequence is that of 3-dehydroquinate dehydratase from Nostoc sp. (strain PCC 7120 / SAG 25.82 / UTEX 2576).